A 370-amino-acid chain; its full sequence is Zinc finger protein 830 (370 aa).

Disordered regions lie at residues 1–21 and 75–220; these read MASS…QEEL and HRER…LVPH. Alanine 2 carries the post-translational modification N-acetylalanine. Positions 16-40 form a coiled coil; it reads VNQEELRRLMKEKQRLSTNRKRIES. The segment at 53–75 adopts a C2H2-type zinc-finger fold; the sequence is CALCNTPVKSELLWQTHVLGKQH. Positions 90-99 are enriched in polar residues; the sequence is QGPSAGTAPQ. Residues 104–115 show a composition bias toward basic and acidic residues; it reads KTTDVESQDAKK. The segment covering 121–134 has biased composition (polar residues); it reads DQVQPSTSASSANF. Residues 156-171 show a composition bias toward acidic residues; that stretch reads DYEEEEEEEEEEELGG. A compositionally biased stretch (basic and acidic residues) spans 172-191; the sequence is GEERRDSSKHLPDAQGREHS. Residues 196-212 show a composition bias toward polar residues; the sequence is RETTSNVLPNDPFNTNP. Serine 223 is subject to Phosphoserine. Residues 310 to 338 adopt a coiled-coil conformation; it reads IECYRRVEKLRNRQDEIKNKLKEVLTIKE. 2 positions are modified to phosphoserine: serine 349 and serine 360.

As to quaternary structure, component of the XAB2 complex, a multimeric protein complex composed of XAB2, PRPF19, AQR, ZNF830, ISY1, and PPIE; this complex binds preferentially to RNA. Interacts with XAB2. Identified in a pentameric intron-binding (IB) complex composed of AQR, XAB2, ISY1, ZNF830 and PPIE that is incorporated into the spliceosome as a preassembled complex. The IB complex does not contain PRPF19. In terms of processing, phosphorylated in response to DNA damage by the cell cycle checkpoint kinases ATR/ATM.

Its subcellular location is the nucleus. The protein localises to the chromosome. It is found in the nucleus speckle. Its function is as follows. May play a role in pre-mRNA splicing as component of the spliceosome. Acts as an important regulator of the cell cycle that participates in the maintenance of genome integrity. During cell cycle progression in embryonic fibroblast, prevents replication fork collapse, double-strand break formation and cell cycle checkpoint activation. Controls mitotic cell cycle progression and cell survival in rapidly proliferating intestinal epithelium and embryonic stem cells. During the embryo preimplantation, controls different aspects of M phase. During early oocyte growth, plays a role in oocyte survival by preventing chromosomal breaks formation, activation of TP63 and reduction of transcription. This is Zinc finger protein 830 from Rattus norvegicus (Rat).